A 73-amino-acid polypeptide reads, in one-letter code: Large ribosomal subunit protein bL31 (73 aa).

This sequence belongs to the bacterial ribosomal protein bL31 family. Type A subfamily. In terms of assembly, part of the 50S ribosomal subunit.

In terms of biological role, binds the 23S rRNA. The polypeptide is Large ribosomal subunit protein bL31 (Rhizobium rhizogenes (strain K84 / ATCC BAA-868) (Agrobacterium radiobacter)).